The chain runs to 309 residues: NAD kinase (309 aa).

Catalysis depends on D89, which acts as the Proton acceptor. Residues 89–90 (DG), 163–164 (NE), H174, R191, D193, and 204–209 (TAYSLS) contribute to the NAD(+) site.

Belongs to the NAD kinase family. Requires a divalent metal cation as cofactor.

It localises to the cytoplasm. It carries out the reaction NAD(+) + ATP = ADP + NADP(+) + H(+). Its function is as follows. Involved in the regulation of the intracellular balance of NAD and NADP, and is a key enzyme in the biosynthesis of NADP. Catalyzes specifically the phosphorylation on 2'-hydroxyl of the adenosine moiety of NAD to yield NADP. The sequence is that of NAD kinase from Shewanella piezotolerans (strain WP3 / JCM 13877).